The chain runs to 106 residues: Large ribosomal subunit protein uL24 (106 aa).

The protein belongs to the universal ribosomal protein uL24 family. In terms of assembly, part of the 50S ribosomal subunit.

One of two assembly initiator proteins, it binds directly to the 5'-end of the 23S rRNA, where it nucleates assembly of the 50S subunit. In terms of biological role, one of the proteins that surrounds the polypeptide exit tunnel on the outside of the subunit. The protein is Large ribosomal subunit protein uL24 of Parabacteroides distasonis (strain ATCC 8503 / DSM 20701 / CIP 104284 / JCM 5825 / NCTC 11152).